A 199-amino-acid chain; its full sequence is ATP-dependent Clp protease proteolytic subunit (199 aa).

The active-site Nucleophile is Ser-97. Residue His-122 is part of the active site.

Belongs to the peptidase S14 family. In terms of assembly, fourteen ClpP subunits assemble into 2 heptameric rings which stack back to back to give a disk-like structure with a central cavity, resembling the structure of eukaryotic proteasomes.

The protein resides in the cytoplasm. It carries out the reaction Hydrolysis of proteins to small peptides in the presence of ATP and magnesium. alpha-casein is the usual test substrate. In the absence of ATP, only oligopeptides shorter than five residues are hydrolyzed (such as succinyl-Leu-Tyr-|-NHMec, and Leu-Tyr-Leu-|-Tyr-Trp, in which cleavage of the -Tyr-|-Leu- and -Tyr-|-Trp bonds also occurs).. Cleaves peptides in various proteins in a process that requires ATP hydrolysis. Has a chymotrypsin-like activity. Plays a major role in the degradation of misfolded proteins. The protein is ATP-dependent Clp protease proteolytic subunit of Citrifermentans bemidjiense (strain ATCC BAA-1014 / DSM 16622 / JCM 12645 / Bem) (Geobacter bemidjiensis).